A 452-amino-acid chain; its full sequence is UDP-N-acetylmuramate--L-alanine ligase (452 aa).

Position 121-127 (121-127 (GTHGKTT)) interacts with ATP.

Belongs to the MurCDEF family.

It is found in the cytoplasm. It catalyses the reaction UDP-N-acetyl-alpha-D-muramate + L-alanine + ATP = UDP-N-acetyl-alpha-D-muramoyl-L-alanine + ADP + phosphate + H(+). It participates in cell wall biogenesis; peptidoglycan biosynthesis. Cell wall formation. This Christiangramia forsetii (strain DSM 17595 / CGMCC 1.15422 / KT0803) (Gramella forsetii) protein is UDP-N-acetylmuramate--L-alanine ligase.